A 638-amino-acid chain; its full sequence is Phosphomethylpyrimidine synthase (638 aa).

Substrate-binding positions include Asn-233, Met-262, Tyr-291, His-327, 347–349 (SRG), 388–391 (DGLR), and Glu-427. Position 431 (His-431) interacts with Zn(2+). Residue Tyr-454 coordinates substrate. Residue His-495 coordinates Zn(2+). Residues Cys-575, Cys-578, and Cys-583 each contribute to the [4Fe-4S] cluster site.

It belongs to the ThiC family. In terms of assembly, homodimer. [4Fe-4S] cluster is required as a cofactor.

It carries out the reaction 5-amino-1-(5-phospho-beta-D-ribosyl)imidazole + S-adenosyl-L-methionine = 4-amino-2-methyl-5-(phosphooxymethyl)pyrimidine + CO + 5'-deoxyadenosine + formate + L-methionine + 3 H(+). Its pathway is cofactor biosynthesis; thiamine diphosphate biosynthesis. In terms of biological role, catalyzes the synthesis of the hydroxymethylpyrimidine phosphate (HMP-P) moiety of thiamine from aminoimidazole ribotide (AIR) in a radical S-adenosyl-L-methionine (SAM)-dependent reaction. The chain is Phosphomethylpyrimidine synthase from Saccharophagus degradans (strain 2-40 / ATCC 43961 / DSM 17024).